The following is a 581-amino-acid chain: Arginine--tRNA ligase (581 aa).

Positions 126–136 match the 'HIGH' region motif; it reads PNLAKEMHVGH.

The protein belongs to the class-I aminoacyl-tRNA synthetase family. Monomer.

The protein resides in the cytoplasm. It carries out the reaction tRNA(Arg) + L-arginine + ATP = L-arginyl-tRNA(Arg) + AMP + diphosphate. The polypeptide is Arginine--tRNA ligase (Shewanella woodyi (strain ATCC 51908 / MS32)).